A 376-amino-acid chain; its full sequence is MNYNSINLVKTHLINYPCPLNINFLWNYGFLLGIIFFIQILTGVFLASRYSPEISYAYYSIQHILRELWSGWCFRYMHATGASLVFFLTYLHILRGLNYSYLYLPLSWISGLIIFALFIVTAFIGYVLPWGQMSYWGATVITNLLSGIPSLVIWLCGGYTVSDPTIKRFFVLHFILPFVALCIVFIHIFFLHLHGSTNPLGYDTALKIPFYPNLLSLDVKGFNNILILFLIQSIFGVIPLSHPDNAIVVNTYVTPLQIVPEWYFLPFYAMLKTIPSKNAGLVIVIASLQLLFLLAEQRNLTTIIQFKMVFSAREYSVPIIWFMCSFYALLWIGCPLPQDIFILYGRLFIILFFSSGLFSLVQNKKTHYDYSSQANI.

4 helical membrane passes run 28–48, 72–94, 107–127, and 169–189; these read YGFL…FLAS, WCFR…LHIL, SWIS…IGYV, and FFVL…IHIF. Residues His-78 and His-92 each contribute to the heme b site. 2 residues coordinate heme b: His-173 and His-187. His-192 contributes to the a ubiquinone binding site. A run of 4 helical transmembrane segments spans residues 214 to 234, 274 to 294, 317 to 337, and 340 to 360; these read LLSL…IQSI, IPSK…LFLL, VPII…CPLP, and IFIL…LFSL.

The protein belongs to the cytochrome b family. In terms of assembly, the main subunits of complex b-c1 are: cytochrome b, cytochrome c1 and the Rieske protein. Heme b serves as cofactor.

The protein localises to the mitochondrion inner membrane. Component of the ubiquinol-cytochrome c reductase complex (complex III or cytochrome b-c1 complex) that is part of the mitochondrial respiratory chain. The b-c1 complex mediates electron transfer from ubiquinol to cytochrome c. Contributes to the generation of a proton gradient across the mitochondrial membrane that is then used for ATP synthesis. This Plasmodium berghei protein is Cytochrome b (MT-CYB).